Here is a 638-residue protein sequence, read N- to C-terminus: LIM domain kinase 2 (638 aa).

LIM zinc-binding domains follow at residues 12 to 63 and 72 to 124; these read CQGC…CHKD and CHGC…CGKC. The region spanning 152-239 is the PDZ domain; it reads HISMPATTEG…TLQLLIEHDP (88 aa). Positions 280–304 are disordered; sequence RRRSLRRSNSISKSPGPSSPKEPLL. Residues 286-304 show a composition bias toward low complexity; it reads RSNSISKSPGPSSPKEPLL. Ser-293 and Ser-298 each carry phosphoserine. Positions 331-608 constitute a Protein kinase domain; that stretch reads LIHGEVLGKG…DFFEALSLYL (278 aa). ATP contacts are provided by residues 337 to 345 and Asn-360; that span reads LGKGFFGQA. Asp-451 is an active-site residue. Thr-505 is subject to Phosphothreonine; by ROCK1 and CDC42BP.

It belongs to the protein kinase superfamily. TKL Ser/Thr protein kinase family. As to quaternary structure, binds ROCK1 and MARF1. Interacts with NISCH. Phosphorylated on serine and/or threonine residues by ROCK1.

It is found in the cytoplasm. The protein resides in the cytoskeleton. The protein localises to the spindle. It localises to the microtubule organizing center. Its subcellular location is the centrosome. The catalysed reaction is L-seryl-[protein] + ATP = O-phospho-L-seryl-[protein] + ADP + H(+). The enzyme catalyses L-threonyl-[protein] + ATP = O-phospho-L-threonyl-[protein] + ADP + H(+). Serine/threonine-protein kinase that plays an essential role in the regulation of actin filament dynamics. Acts downstream of several Rho family GTPase signal transduction pathways. Involved in astral microtubule organization and mitotic spindle orientation during early stages of mitosis by mediating phosphorylation of TPPP. Displays serine/threonine-specific phosphorylation of myelin basic protein and histone (MBP) in vitro. Suppresses ciliogenesis via multiple pathways; phosphorylation of CFL1, suppression of directional trafficking of ciliary vesicles to the ciliary base, and by facilitating YAP1 nuclear localization where it acts as a transcriptional corepressor of the TEAD4 target genes AURKA and PLK1. In Bos taurus (Bovine), this protein is LIM domain kinase 2 (LIMK2).